Consider the following 378-residue polypeptide: Beta-1,3-galactosyltransferase pvg3 (378 aa).

Residues 1-8 (MFSNSKKK) lie on the Cytoplasmic side of the membrane. Residues 9 to 29 (IFLYVLIAGVATFSFAFLVLN) form a helical; Signal-anchor for type II membrane protein membrane-spanning segment. Residues 30-378 (RLQAEEHSLA…ATIPLPSLDV (349 aa)) lie on the Lumenal side of the membrane. Asn53, Asn97, Asn180, and Asn354 each carry an N-linked (GlcNAc...) asparagine glycan.

This sequence belongs to the glycosyltransferase 31 family.

Its subcellular location is the endoplasmic reticulum membrane. The protein resides in the golgi apparatus. It is found in the golgi stack membrane. It catalyses the reaction 3-O-(beta-D-galactosyl-(1-&gt;4)-beta-D-xylosyl)-L-seryl-[protein] + UDP-alpha-D-galactose = 3-O-(beta-D-galactosyl-(1-&gt;3)-beta-D-galactosyl-(1-&gt;4)-beta-D-xylosyl)-L-seryl-[protein] + UDP + H(+). Functionally, involved in cell wall biogenesis. Has a role in the addition of Gal-beta1,3 moeities to galactomannans and their subsequent pyruvylation. Has a role in meiosis. This Schizosaccharomyces pombe (strain 972 / ATCC 24843) (Fission yeast) protein is Beta-1,3-galactosyltransferase pvg3 (pvg3).